The following is a 235-amino-acid chain: Motile sperm domain-containing protein 3 (235 aa).

Disordered stretches follow at residues 1–30 and 143–170; these read MRRG…PSGP and ELQG…PFPE. The MSP domain occupies 33–145; the sequence is PVLVFPPDLV…RAPAYPLELQ (113 aa). Transmembrane regions (helical) follow at residues 180 to 200 and 213 to 233; these read SFLL…LPLQ and VSLG…MVFL.

It is found in the membrane. The chain is Motile sperm domain-containing protein 3 (MOSPD3) from Bos taurus (Bovine).